A 110-amino-acid chain; its full sequence is UPF0060 membrane protein SACE_5620 (110 aa).

A run of 4 helical transmembrane segments spans residues 8-28 (VVLF…VWQG), 34-54 (GLLW…VATF), 63-83 (ILAA…VVVD), and 89-109 (RWDL…MYAP).

Belongs to the UPF0060 family.

It localises to the cell membrane. This chain is UPF0060 membrane protein SACE_5620, found in Saccharopolyspora erythraea (strain ATCC 11635 / DSM 40517 / JCM 4748 / NBRC 13426 / NCIMB 8594 / NRRL 2338).